We begin with the raw amino-acid sequence, 956 residues long: Golgin candidate 5 (956 aa).

2 disordered regions span residues 70 to 230 and 278 to 298; these read MSFM…QHKI and IFESDGSPYESSIPKRSSSDE. Composition is skewed to basic and acidic residues over residues 77–89 and 118–129; these read SDEKPDTLEDSVR and ANKETNVRREAD. Polar residues-rich tracts occupy residues 160–177 and 184–193; these read EYSLQTPESSGYKTSLQP and TASQDSQPEQ. Basic and acidic residues predominate over residues 206 to 219; the sequence is SEAKEVTVENKDTV. A coiled-coil region spans residues 333–765; the sequence is SDSADVILEL…LIQKDLEREK (433 aa). Position 793 is a phosphoserine (serine 793). Residues 851-951 are a coiled coil; it reads SAYEATLRQK…EMYREQVNML (101 aa).

Interacts with RABH1B and RABH1C, but not with RABD1 or RABD2A.

It is found in the golgi apparatus. It localises to the cytoplasm. In terms of biological role, golgi matrix protein playing a role in tethering of vesicles to Golgi membranes and in maintaining the overall structure of the Golgi apparatus. The polypeptide is Golgin candidate 5 (GC5) (Arabidopsis thaliana (Mouse-ear cress)).